Consider the following 478-residue polypeptide: Membrane-bound lytic murein transglycosylase F (478 aa).

Positions 1–22 (MTRFLFAIILGFLLTACQQVTV) are cleaved as a signal peptide. The interval 23–257 (EETEYVPHKL…HLNEKYFGHV (235 aa)) is non-LT domain. The LT domain stretch occupies residues 258–478 (KRFDYIDTRA…PGTLSPDKPK (221 aa)). Glu-302 is a catalytic residue. The tract at residues 446-478 (SKQQNSDEEEPSDLASEDGPAPVPGTLSPDKPK) is disordered. Acidic residues predominate over residues 451–461 (SDEEEPSDLAS).

In the N-terminal section; belongs to the bacterial solute-binding protein 3 family. It in the C-terminal section; belongs to the transglycosylase Slt family.

Its subcellular location is the cell outer membrane. It carries out the reaction Exolytic cleavage of the (1-&gt;4)-beta-glycosidic linkage between N-acetylmuramic acid (MurNAc) and N-acetylglucosamine (GlcNAc) residues in peptidoglycan, from either the reducing or the non-reducing ends of the peptidoglycan chains, with concomitant formation of a 1,6-anhydrobond in the MurNAc residue.. In terms of biological role, murein-degrading enzyme that degrades murein glycan strands and insoluble, high-molecular weight murein sacculi, with the concomitant formation of a 1,6-anhydromuramoyl product. Lytic transglycosylases (LTs) play an integral role in the metabolism of the peptidoglycan (PG) sacculus. Their lytic action creates space within the PG sacculus to allow for its expansion as well as for the insertion of various structures such as secretion systems and flagella. The sequence is that of Membrane-bound lytic murein transglycosylase F from Shewanella sp. (strain ANA-3).